Reading from the N-terminus, the 227-residue chain is Cytochrome c oxidase subunit 2 (227 aa).

The Mitochondrial intermembrane segment spans residues 1 to 14 (MAHPAQLGFQDAAS). Residues 15-45 (PIMEELMYFHDHTLMIVFLISSLVLYIISLM) form a helical membrane-spanning segment. Topologically, residues 46 to 59 (LTTELTHTSTMDAQ) are mitochondrial matrix. The helical transmembrane segment at 60–87 (EVETVWTILPAVILILIALPSLRILYMM) threads the bilayer. Residues 88 to 227 (DEITTPSLTL…HFEEWLLSTL (140 aa)) lie on the Mitochondrial intermembrane side of the membrane. Residues His161, Cys196, Glu198, Cys200, His204, and Met207 each coordinate Cu cation. Glu198 provides a ligand contact to Mg(2+).

It belongs to the cytochrome c oxidase subunit 2 family. In terms of assembly, component of the cytochrome c oxidase (complex IV, CIV), a multisubunit enzyme composed of 14 subunits. The complex is composed of a catalytic core of 3 subunits MT-CO1, MT-CO2 and MT-CO3, encoded in the mitochondrial DNA, and 11 supernumerary subunits COX4I, COX5A, COX5B, COX6A, COX6B, COX6C, COX7A, COX7B, COX7C, COX8 and NDUFA4, which are encoded in the nuclear genome. The complex exists as a monomer or a dimer and forms supercomplexes (SCs) in the inner mitochondrial membrane with NADH-ubiquinone oxidoreductase (complex I, CI) and ubiquinol-cytochrome c oxidoreductase (cytochrome b-c1 complex, complex III, CIII), resulting in different assemblies (supercomplex SCI(1)III(2)IV(1) and megacomplex MCI(2)III(2)IV(2)). Found in a complex with TMEM177, COA6, COX18, COX20, SCO1 and SCO2. Interacts with TMEM177 in a COX20-dependent manner. Interacts with COX20. Interacts with COX16. Requires Cu cation as cofactor.

It is found in the mitochondrion inner membrane. The catalysed reaction is 4 Fe(II)-[cytochrome c] + O2 + 8 H(+)(in) = 4 Fe(III)-[cytochrome c] + 2 H2O + 4 H(+)(out). In terms of biological role, component of the cytochrome c oxidase, the last enzyme in the mitochondrial electron transport chain which drives oxidative phosphorylation. The respiratory chain contains 3 multisubunit complexes succinate dehydrogenase (complex II, CII), ubiquinol-cytochrome c oxidoreductase (cytochrome b-c1 complex, complex III, CIII) and cytochrome c oxidase (complex IV, CIV), that cooperate to transfer electrons derived from NADH and succinate to molecular oxygen, creating an electrochemical gradient over the inner membrane that drives transmembrane transport and the ATP synthase. Cytochrome c oxidase is the component of the respiratory chain that catalyzes the reduction of oxygen to water. Electrons originating from reduced cytochrome c in the intermembrane space (IMS) are transferred via the dinuclear copper A center (CU(A)) of subunit 2 and heme A of subunit 1 to the active site in subunit 1, a binuclear center (BNC) formed by heme A3 and copper B (CU(B)). The BNC reduces molecular oxygen to 2 water molecules using 4 electrons from cytochrome c in the IMS and 4 protons from the mitochondrial matrix. This is Cytochrome c oxidase subunit 2 (MT-CO2) from Microcebus tavaratra (Northern rufous mouse lemur).